Here is a 99-residue protein sequence, read N- to C-terminus: Large ribosomal subunit protein eL21 (99 aa).

Over residues 1–18 (MVKHSRGNRTRSRKLLKK) the composition is skewed to basic residues. The interval 1 to 26 (MVKHSRGNRTRSRKLLKKSPRERGAV) is disordered.

Belongs to the eukaryotic ribosomal protein eL21 family.

The chain is Large ribosomal subunit protein eL21 from Metallosphaera sedula (strain ATCC 51363 / DSM 5348 / JCM 9185 / NBRC 15509 / TH2).